A 1223-amino-acid chain; its full sequence is Rho family-interacting cell polarization regulator 1 (1223 aa).

A Phosphoserine modification is found at Ser22. A coiled-coil region spans residues Leu89 to Ser114. Phosphoserine occurs at positions 349 and 351. The residue at position 355 (Thr355) is a Phosphothreonine. The disordered stretch occupies residues Asn375 to Pro411. Over residues Ser380–Ser395 the composition is skewed to low complexity. Phosphoserine occurs at positions 456 and 459. 2 disordered regions span residues Glu475 to His769 and Phe856 to Ala889. 2 stretches are compositionally biased toward low complexity: residues Gly505–Thr523 and Pro546–His564. Positions Ser565–Thr592 are enriched in polar residues. 2 stretches are compositionally biased toward low complexity: residues Thr601–Ser650 and Thr659–Pro675. Over residues Val680–Ser695 the composition is skewed to polar residues. Residues Asn858–Val867 are compositionally biased toward acidic residues. Phosphoserine is present on residues Ser874 and Ser875.

This sequence belongs to the RIPOR family. Interacts (via N-terminus) with RHOA (GTP-bound form); this interaction links active RHOA to STK24 and STK26 kinases. Interacts with RHOB. Interacts with RHOC. Interacts (via C-terminus) with PDCD10; this interaction occurs in a Rho-independent manner. Interacts (via C-terminus) with STK24; this interaction occurs in a PDCD10-dependent and Rho-independent manner. Interacts (via C-terminus) with STK26; this interaction occurs in a PDCD10-dependent and Rho-independent manner. Interacts (via N-terminus) with 14-3-3 proteins; these interactions occur in a Rho-dependent manner.

It localises to the cytoplasm. The protein resides in the golgi apparatus. In terms of biological role, downstream effector protein for Rho-type small GTPases that plays a role in cell polarity and directional migration. Acts as an adapter protein, linking active Rho proteins to STK24 and STK26 kinases, and hence positively regulates Golgi reorientation in polarized cell migration upon Rho activation. Involved in the subcellular relocation of STK26 from the Golgi to cytoplasm punctae in a Rho- and PDCD10-dependent manner upon serum stimulation. The chain is Rho family-interacting cell polarization regulator 1 (RIPOR1) from Homo sapiens (Human).